We begin with the raw amino-acid sequence, 90 residues long: Phosphoribosyl-ATP pyrophosphatase (90 aa).

The protein belongs to the PRA-PH family.

The protein localises to the cytoplasm. The catalysed reaction is 1-(5-phospho-beta-D-ribosyl)-ATP + H2O = 1-(5-phospho-beta-D-ribosyl)-5'-AMP + diphosphate + H(+). The protein operates within amino-acid biosynthesis; L-histidine biosynthesis; L-histidine from 5-phospho-alpha-D-ribose 1-diphosphate: step 2/9. This chain is Phosphoribosyl-ATP pyrophosphatase (hisE), found in Streptomyces coelicolor (strain ATCC BAA-471 / A3(2) / M145).